The primary structure comprises 288 residues: Bifunctional protein FolD (288 aa).

Residues 166 to 168 (GRS), S191, and V232 each bind NADP(+).

This sequence belongs to the tetrahydrofolate dehydrogenase/cyclohydrolase family. As to quaternary structure, homodimer.

It catalyses the reaction (6R)-5,10-methylene-5,6,7,8-tetrahydrofolate + NADP(+) = (6R)-5,10-methenyltetrahydrofolate + NADPH. The enzyme catalyses (6R)-5,10-methenyltetrahydrofolate + H2O = (6R)-10-formyltetrahydrofolate + H(+). The protein operates within one-carbon metabolism; tetrahydrofolate interconversion. Its function is as follows. Catalyzes the oxidation of 5,10-methylenetetrahydrofolate to 5,10-methenyltetrahydrofolate and then the hydrolysis of 5,10-methenyltetrahydrofolate to 10-formyltetrahydrofolate. This Roseiflexus castenholzii (strain DSM 13941 / HLO8) protein is Bifunctional protein FolD.